Consider the following 131-residue polypeptide: Flagellar assembly factor FliW (131 aa).

Belongs to the FliW family. Interacts with translational regulator CsrA and flagellin(s).

It is found in the cytoplasm. In terms of biological role, acts as an anti-CsrA protein, binds CsrA and prevents it from repressing translation of its target genes, one of which is flagellin. Binds to flagellin and participates in the assembly of the flagellum. This Campylobacter lari (strain RM2100 / D67 / ATCC BAA-1060) protein is Flagellar assembly factor FliW.